We begin with the raw amino-acid sequence, 340 residues long: Probable dual-specificity RNA methyltransferase RlmN (340 aa).

Glutamate 93 acts as the Proton acceptor in catalysis. The Radical SAM core domain occupies 99 to 327 (TAKRLTVCVS…VSVRYSRGLE (229 aa)). An intrachain disulfide couples cysteine 106 to cysteine 332. Residues cysteine 113, cysteine 117, and cysteine 120 each coordinate [4Fe-4S] cluster. Residues 160–161 (GE), serine 190, 213–215 (SLH), and asparagine 289 contribute to the S-adenosyl-L-methionine site. The S-methylcysteine intermediate role is filled by cysteine 332.

Belongs to the radical SAM superfamily. RlmN family. [4Fe-4S] cluster is required as a cofactor.

The protein resides in the cytoplasm. The enzyme catalyses adenosine(2503) in 23S rRNA + 2 reduced [2Fe-2S]-[ferredoxin] + 2 S-adenosyl-L-methionine = 2-methyladenosine(2503) in 23S rRNA + 5'-deoxyadenosine + L-methionine + 2 oxidized [2Fe-2S]-[ferredoxin] + S-adenosyl-L-homocysteine. It catalyses the reaction adenosine(37) in tRNA + 2 reduced [2Fe-2S]-[ferredoxin] + 2 S-adenosyl-L-methionine = 2-methyladenosine(37) in tRNA + 5'-deoxyadenosine + L-methionine + 2 oxidized [2Fe-2S]-[ferredoxin] + S-adenosyl-L-homocysteine. Its function is as follows. Specifically methylates position 2 of adenine 2503 in 23S rRNA and position 2 of adenine 37 in tRNAs. The sequence is that of Probable dual-specificity RNA methyltransferase RlmN from Rippkaea orientalis (strain PCC 8801 / RF-1) (Cyanothece sp. (strain PCC 8801)).